The following is a 206-amino-acid chain: Protein Nef (206 aa).

A lipid anchor (N-myristoyl glycine; by host) is attached at Gly-2. At Ser-6 the chain carries Phosphoserine; by host. Positions Glu-62–Lys-65 are acidic; interacts with host PACS1 and PACS2; stabilizes the interaction of NEF/MHC-I with host AP1M1; necessary for MHC-I internalization. Positions Pro-69 to Pro-78 are SH3-binding; interaction with Src family tyrosine kinases. The short motif at Pro-72–Pro-75 is the PxxP; stabilizes the interaction of NEF/MHC-I with host AP1M1; necessary for MHC-I internalization element. A mediates dimerization, Nef-PTE1 interaction region spans residues Asp-108–Trp-124. Residues Val-148–Val-180 are binding to ATP6V1H. The Dileucine internalization motif; necessary for CD4 internalization signature appears at Leu-164–Leu-165. A Diacidic; necessary for CD4 internalization motif is present at residues Asp-174 to Asp-175.

Belongs to the lentivirus primate group Nef protein family. As to quaternary structure, monomer; cytosolic form. Homodimer; membrane bound form. Interacts with Nef associated p21-activated kinase (PAK2); this interaction activates PAK2. Associates with the Nef-MHC-I-AP1 complex; this complex is required for MHC-I internalization. Interacts (via C-terminus) with host PI3-kinase. Interacts with host PACS1; this interaction seems to be weak. Interacts with host PACS2. Interacts with host LCK and MAPK3; these interactions inhibit the kinase activity of the latter. Interacts with host ATP6V1H; this interaction may play a role in CD4 endocytosis. Associates with the CD4-Nef-AP2 complex; this complex is required for CD4 internalization. Interacts with host AP2 subunit alpha and AP2 subunit sigma2. Interacts with TCR-zeta chain; this interaction up-regulates the Fas ligand (FasL) surface expression. Interacts with host HCK, LYN, and SRC; these interactions activate the Src family kinases. Interacts with MAP3K5; this interaction inhibits the Fas and TNFR-mediated death signals. Interacts with beta-COP and PTE1. Interacts with human RACK1; this increases Nef phosphorylation by PKC. Interacts with TP53; this interaction decreases the half-life of TP53, protecting the infected cell against p53-mediated apoptosis. In terms of processing, the virion-associated Nef proteins are cleaved by the viral protease to release the soluble C-terminal core protein. Nef is probably cleaved concomitantly with viral structural proteins on maturation of virus particles. Myristoylated. Post-translationally, phosphorylated on serine residues, probably by host PKCdelta and theta.

It localises to the host cell membrane. The protein localises to the virion. The protein resides in the secreted. It is found in the host Golgi apparatus membrane. Factor of infectivity and pathogenicity, required for optimal virus replication. Alters numerous pathways of T-lymphocyte function and down-regulates immunity surface molecules in order to evade host defense and increase viral infectivity. Alters the functionality of other immunity cells, like dendritic cells, monocytes/macrophages and NK cells. Functionally, in infected CD4(+) T-lymphocytes, down-regulates the surface MHC-I, mature MHC-II, CD4, CD28, CCR5 and CXCR4 molecules. Mediates internalization and degradation of host CD4 through the interaction of with the cytoplasmic tail of CD4, the recruitment of AP-2 (clathrin adapter protein complex 2), internalization through clathrin coated pits, and subsequent transport to endosomes and lysosomes for degradation. Diverts host MHC-I molecules to the trans-Golgi network-associated endosomal compartments by an endocytic pathway to finally target them for degradation. MHC-I down-regulation may involve AP-1 (clathrin adapter protein complex 1) or possibly Src family kinase-ZAP70/Syk-PI3K cascade recruited by PACS2. In consequence infected cells are masked for immune recognition by cytotoxic T-lymphocytes. Decreasing the number of immune receptors also prevents reinfection by more HIV particles (superinfection). Down-regulates host SERINC3 and SERINC5 thereby excluding these proteins from the viral particles. Virion infectivity is drastically higher when SERINC3 or SERINC5 are excluded from the viral envelope, because these host antiviral proteins impair the membrane fusion event necessary for subsequent virion penetration. Its function is as follows. Bypasses host T-cell signaling by inducing a transcriptional program nearly identical to that of anti-CD3 cell activation. Interaction with TCR-zeta chain up-regulates the Fas ligand (FasL). Increasing surface FasL molecules and decreasing surface MHC-I molecules on infected CD4(+) cells send attacking cytotoxic CD8+ T-lymphocytes into apoptosis. In terms of biological role, plays a role in optimizing the host cell environment for viral replication without causing cell death by apoptosis. Protects the infected cells from apoptosis in order to keep them alive until the next virus generation is ready to strike. Inhibits the Fas and TNFR-mediated death signals by blocking MAP3K5/ASK1. Decreases the half-life of TP53, protecting the infected cell against p53-mediated apoptosis. Inhibits the apoptotic signals regulated by the Bcl-2 family proteins through the formation of a Nef/PI3-kinase/PAK2 complex that leads to activation of PAK2 and induces phosphorylation of host BAD. Extracellular Nef protein targets CD4(+) T-lymphocytes for apoptosis by interacting with CXCR4 surface receptors. The sequence is that of Protein Nef from Homo sapiens (Human).